The sequence spans 375 residues: G-protein coupled estrogen receptor 1 (375 aa).

An N-acetylmethionine modification is found at M1. The Extracellular portion of the chain corresponds to 1–62 (MDVTSQARGV…QQYVIGLFLS (62 aa)). N25, N32, and N44 each carry an N-linked (GlcNAc...) asparagine glycan. The chain crosses the membrane as a helical span at residues 63 to 84 (CLYTIFLFPIGFVGNILILVVN). At 85-96 (ISFREKMTIPDL) the chain is on the cytoplasmic side. The chain crosses the membrane as a helical span at residues 97 to 120 (YFINLAVADLILVADSLIEVFNLH). Residues 121 to 132 (ERYYDIAVLCTF) lie on the Extracellular side of the membrane. C130 and C207 are joined by a disulfide. Residues 133 to 153 (MSLFLQVNMYSSVFFLTWMSF) traverse the membrane as a helical segment. Residues 154–175 (DRYIALARAMRCSLFRTKHHAR) lie on the Cytoplasmic side of the membrane. A helical membrane pass occupies residues 176–194 (LSCGLIWMASVSATLVPFT). Topologically, residues 195–220 (AVHLQHTDEACFCFADVREVQWLEVT) are extracellular. The chain crosses the membrane as a helical span at residues 221–236 (LGFIVPFAIIGLCYSL). At 237 to 259 (IVRVLVRAHRHRGLRPRRQKALR) the chain is on the cytoplasmic side. Residues 260–280 (MILAVVLVFFVCWLPENVFIS) traverse the membrane as a helical segment. The Extracellular portion of the chain corresponds to 281–306 (VHLLQRTQPGAAPCKQSFRHAHPLTG). Residues 307-327 (HIVNLAAFSNSCLNPLIYSFL) traverse the membrane as a helical segment. Topologically, residues 328–375 (GETFRDKLRLYIEQKTNLPALNRFCHAALKAVIPDSTEQSDVRFSSAV) are cytoplasmic.

Belongs to the G-protein coupled receptor 1 family. In terms of assembly, homodimer. Heterodimer; heterodimerizes with other G-protein-coupled receptor (GPCRs) like CRHR1, HTR1A and PAQR8. Interacts (via C-terminus tail motif) with DLG4 (via N-terminus tandem pair of PDZ domains); the interaction is direct and induces the increase of GPER1 protein levels residing at the plasma membrane surface in a estradiol-independent manner. Interacts with RAMP3; the interaction confers proper subcellular localization and function in cardioprotection. Interacts with KRT7 and KRT8. Interacts with EGFR; the interaction increases after agonist-induced stimulation in cancer-associated fibroblasts (CAF). Interacts with EGFR and ESR1. Ubiquitinated; ubiquitination occurs at the plasma membrane and leads to proteasome-mediated degradation. Post-translationally, glycosylated. In terms of tissue distribution, expressed in placenta, endothelial and epithelial cells, non laboring and laboring term myometrium, fibroblasts and cancer-associated fibroblasts (CAF), prostate cancer cells and invasive adenocarcinoma (at protein level). Ubiquitously expressed, but is most abundant in placenta. In brain regions, expressed as a 2.8 kb transcript in basal forebrain, frontal cortex, thalamus, hippocampus, caudate and putamen.

The protein localises to the nucleus. It is found in the cytoplasm. The protein resides in the perinuclear region. It localises to the cytoskeleton. Its subcellular location is the cell membrane. The protein localises to the basolateral cell membrane. It is found in the cytoplasmic vesicle membrane. The protein resides in the early endosome. It localises to the recycling endosome. Its subcellular location is the golgi apparatus membrane. The protein localises to the golgi apparatus. It is found in the trans-Golgi network. The protein resides in the endoplasmic reticulum membrane. It localises to the cell projection. Its subcellular location is the dendrite. The protein localises to the dendritic spine membrane. It is found in the axon. The protein resides in the postsynaptic density. It localises to the mitochondrion membrane. Its function is as follows. G-protein coupled estrogen receptor that binds to 17-beta-estradiol (E2) with high affinity, leading to rapid and transient activation of numerous intracellular signaling pathways. Stimulates cAMP production, calcium mobilization and tyrosine kinase Src inducing the release of heparin-bound epidermal growth factor (HB-EGF) and subsequent transactivation of the epidermal growth factor receptor (EGFR), activating downstream signaling pathways such as PI3K/Akt and ERK/MAPK. Mediates pleiotropic functions among others in the cardiovascular, endocrine, reproductive, immune and central nervous systems. Has a role in cardioprotection by reducing cardiac hypertrophy and perivascular fibrosis in a RAMP3-dependent manner. Regulates arterial blood pressure by stimulating vasodilation and reducing vascular smooth muscle and microvascular endothelial cell proliferation. Plays a role in blood glucose homeostasis contributing to the insulin secretion response by pancreatic beta cells. Triggers mitochondrial apoptosis during pachytene spermatocyte differentiation. Stimulates uterine epithelial cell proliferation. Enhances uterine contractility in response to oxytocin. Contributes to thymic atrophy by inducing apoptosis. Attenuates TNF-mediated endothelial expression of leukocyte adhesion molecules. Promotes neuritogenesis in developing hippocampal neurons. Plays a role in acute neuroprotection against NMDA-induced excitotoxic neuronal death. Increases firing activity and intracellular calcium oscillations in luteinizing hormone-releasing hormone (LHRH) neurons. Inhibits early osteoblast proliferation at growth plate during skeletal development. Inhibits mature adipocyte differentiation and lipid accumulation. Involved in the recruitment of beta-arrestin 2 ARRB2 at the plasma membrane in epithelial cells. Also functions as a receptor for aldosterone mediating rapid regulation of vascular contractibility through the PI3K/ERK signaling pathway. Involved in cancer progression regulation. Stimulates cancer-associated fibroblast (CAF) proliferation by a rapid genomic response through the EGFR/ERK transduction pathway. Associated with EGFR, may act as a transcription factor activating growth regulatory genes (c-fos, cyclin D1). Promotes integrin alpha-5/beta-1 and fibronectin (FN) matrix assembly in breast cancer cells. In Homo sapiens (Human), this protein is G-protein coupled estrogen receptor 1.